The following is a 68-amino-acid chain: uncharacterized protein (68 aa).

This is an uncharacterized protein from Salmonella typhi.